The chain runs to 307 residues: Solute carrier family 25 member 53 (307 aa).

The segment at 1–23 (MGEQNHSPGKELQHRTRAEAPGK) is disordered. A compositionally biased stretch (basic and acidic residues) spans 8-22 (PGKELQHRTRAEAPG). Solcar repeat units lie at residues 25-105 (SWHS…LLCF), 112-202 (HTLG…IQDG), and 210-302 (HWVP…HSRK). 6 helical membrane-spanning segments follow: residues 31 to 51 (YALGAVSNFMSTFLTFPIYKV), 82 to 102 (YPPLLSKTLQGTLLFGTYDSL), 112 to 132 (HTLGHRWAAGLMSGVVEAVAL), 181 to 201 (VLARNSLGSALYFSFKDPIQD), 215 to 235 (LVSGSVNGTITCLVLYPLIVL), and 269 to 290 (IYRGGSLVILRSSVTWGLTTAI).

The protein belongs to the mitochondrial carrier (TC 2.A.29) family.

It is found in the mitochondrion inner membrane. The chain is Solute carrier family 25 member 53 (SLC25A53) from Homo sapiens (Human).